A 42-amino-acid polypeptide reads, in one-letter code: Photosystem I reaction center subunit IX (42 aa).

The chain crosses the membrane as a helical span at residues 8 to 28 (YLSTAPVIGVLWMTFTAGFII).

The protein belongs to the PsaJ family.

It is found in the plastid. It localises to the chloroplast thylakoid membrane. May help in the organization of the PsaE and PsaF subunits. The sequence is that of Photosystem I reaction center subunit IX from Pyropia yezoensis (Susabi-nori).